A 237-amino-acid chain; its full sequence is Phosphoribosylaminoimidazole-succinocarboxamide synthase (237 aa).

This sequence belongs to the SAICAR synthetase family.

The enzyme catalyses 5-amino-1-(5-phospho-D-ribosyl)imidazole-4-carboxylate + L-aspartate + ATP = (2S)-2-[5-amino-1-(5-phospho-beta-D-ribosyl)imidazole-4-carboxamido]succinate + ADP + phosphate + 2 H(+). It functions in the pathway purine metabolism; IMP biosynthesis via de novo pathway; 5-amino-1-(5-phospho-D-ribosyl)imidazole-4-carboxamide from 5-amino-1-(5-phospho-D-ribosyl)imidazole-4-carboxylate: step 1/2. The polypeptide is Phosphoribosylaminoimidazole-succinocarboxamide synthase (Deinococcus radiodurans (strain ATCC 13939 / DSM 20539 / JCM 16871 / CCUG 27074 / LMG 4051 / NBRC 15346 / NCIMB 9279 / VKM B-1422 / R1)).